Here is a 307-residue protein sequence, read N- to C-terminus: uncharacterized protein (307 aa).

Residues 12–34 form a helical membrane-spanning segment; the sequence is LLAFLLALIMIGSVFAYMLSGGS.

The protein localises to the membrane. This is an uncharacterized protein from Archaeoglobus fulgidus (strain ATCC 49558 / DSM 4304 / JCM 9628 / NBRC 100126 / VC-16).